Here is a 75-residue protein sequence, read N- to C-terminus: Small ribosomal subunit protein bS18 (75 aa).

Belongs to the bacterial ribosomal protein bS18 family. In terms of assembly, part of the 30S ribosomal subunit. Forms a tight heterodimer with protein bS6.

In terms of biological role, binds as a heterodimer with protein bS6 to the central domain of the 16S rRNA, where it helps stabilize the platform of the 30S subunit. The polypeptide is Small ribosomal subunit protein bS18 (Shewanella baltica (strain OS223)).